The primary structure comprises 182 residues: Putative manganese efflux pump MntP (182 aa).

The next 6 helical transmembrane spans lie at 6–26 (LIPL…VSLG), 37–57 (ILYI…IGMV), 71–91 (HFAG…SSIL), 101–121 (IGIS…SVGL), 131–151 (VITI…GLFI), and 162–182 (YGEI…LFPI).

It belongs to the MntP (TC 9.B.29) family.

The protein localises to the cell membrane. In terms of biological role, probably functions as a manganese efflux pump. The chain is Putative manganese efflux pump MntP from Bacillus cereus (strain Q1).